Here is a 582-residue protein sequence, read N- to C-terminus: BTB/POZ domain and ankyrin repeat-containing protein NPR1 (582 aa).

The span at 1-18 shows a compositional bias: polar residues; it reads MEPPTSHVTNAFSDSDSA. Positions 1–25 are disordered; it reads MEPPTSHVTNAFSDSDSASVEEGGA. The region spanning 55-140 is the BTB domain; the sequence is ADARIAVPGG…VLDYLYSGRV (86 aa). A C2HC NPR-type zinc finger spans residues 147–161; the sequence is ACLCVDEDCAHVGCH. Residues C150, C155, H157, and C160 each contribute to the Zn(2+) site. ANK repeat units lie at residues 229–258, 269–299, 301–328, and 332–361; these read RSNL…SLGL, KHVR…NLDD, FALH…DVNH, and RGYT…RPAD. The salicylic acid-binding core (SBC) stretch occupies residues 391 to 526; it reads PSPKDRLCIE…VLDKIMDDET (136 aa). R436 contributes to the salicylate binding site. A disordered region spans residues 551 to 582; that stretch reads QKAFHEDKEENDRSGLSSSSSSTSIGAIRPRR. Over residues 553–563 the composition is skewed to basic and acidic residues; it reads AFHEDKEENDR. The segment covering 564-574 has biased composition (low complexity); that stretch reads SGLSSSSSSTS.

This sequence belongs to the plant 'ANKYRIN-BTB/POZ' family. 'NPR1-like' subfamily. In terms of assembly, oligomer in an uninduced state; disulfide-linked. Forms activated monomer upon changes in cellular redox potential. Interacts with TGA2.1, TGA2.2, TGA2.3, LG2, TGAL1 and TGAL4. Interacts with NRR, RH1, RH2 and RH3.

The protein resides in the cytoplasm. Its subcellular location is the nucleus. It is found in the nuclear body. It participates in protein modification; protein ubiquitination. In terms of biological role, salicylic acid (SA)-binding substrate-specific adapter of an E3 ubiquitin-protein ligase complex (CUL3-RBX1-BTB) which mediates the ubiquitination and subsequent proteasomal degradation of target proteins. Transcription cofactor that represses gene expression in the absence of salicylic acid (SA), when attached to negative cis-elements (W-box) with WRKY transcription factors, but stimulates gene expression upon activation by SA, when sumoylated and attached to positive cis-elements (as-1) with TGA transcription factors, thus confering immunity through a series of gene regulations ending in a significant increase in antimicrobial and defense genes expression. Key positive factor of disease resistance. Plays an essential role in benzothiadiazole (BTH)-induced resistance to the blast fungus disease caused by Magnaporthe oryzae. Involved in defense response against the bacterial blight disease caused by Xanthomonas oryzae pv. oryzae (Xoo). Over-expression of NPR1/NH1 confers disease resistance to Xoo, but also enhances herbivore susceptibility. Functions as a transcriptional coactivator of TGA2.1 and LG2 in vitro. Involved in defense response against herbivore. Plants silencing NPR1/NH1 have increased herbivore-induced trypsin proteinase inhibitors and volatiles, which reduces the performance of the striped stem borer (SSB) Chilo suppressalis. This is BTB/POZ domain and ankyrin repeat-containing protein NPR1 from Oryza sativa subsp. japonica (Rice).